The following is a 122-amino-acid chain: Large ribosomal subunit protein uL14 (122 aa).

It belongs to the universal ribosomal protein uL14 family. As to quaternary structure, part of the 50S ribosomal subunit. Forms a cluster with proteins L3 and L19. In the 70S ribosome, L14 and L19 interact and together make contacts with the 16S rRNA in bridges B5 and B8.

Its function is as follows. Binds to 23S rRNA. Forms part of two intersubunit bridges in the 70S ribosome. In Amoebophilus asiaticus (strain 5a2), this protein is Large ribosomal subunit protein uL14.